Here is a 269-residue protein sequence, read N- to C-terminus: Prespore protein Dd31 (269 aa).

Residues Met-1–Pro-17 are compositionally biased toward polar residues. The disordered stretch occupies residues Met-1–His-35. A compositionally biased stretch (low complexity) spans Ala-18 to Ala-29. Transmembrane regions (helical) follow at residues Phe-111–Ile-131, Val-139–Leu-159, Tyr-177–Phe-197, and Val-225–Leu-245.

This sequence belongs to the SCAMP family.

Its subcellular location is the membrane. The protein resides in the spore coat. The chain is Prespore protein Dd31 (spiA) from Dictyostelium discoideum (Social amoeba).